The primary structure comprises 514 residues: MDPLHTIEKVPARRNIHDRGHQGHRMGDGTPGRPKISVQQMTRFSLIIFFLSAPFVVNASTSNVFLQWAHSYADGLQQGDPCWVCGSLPVTNTMELPWWVSPLQGKDWVFFQSFIGDLKQWTGAQMTGVTRKNISEWPINKTLNEPGHDKPFSVNETRDKVIAFAIPLLDTKVFVQTSRPQNTQYRNGFLQIWDGFIWLTATKGHLSQIAPLCWEQRNHSLDNWPNTTRVMGWIPPGQCRHTILLQQRDLFATDWSQQPGLNWYAPNGTQWLCSPNLWPWLPSGWLGCCTLGIPWAQGRWVKTMEVYPYLPHVVNQGTRAIVHRNDHLPTIFMPSVGLGTVIQHIEALANFTQRALNDSLQSISLMNAEVYYMHEDILQNRMALDILTAAEGGTCALIKTECCVYIPNNSRNISLALEDTCRQIQVISSSALSLHDWIASQFSGRPSWWQKILIVLATLWSVGIALCCGLYFCRMFSQHIPQTHSIIFQQELPLSPPSQEHYQSQRDIFHSNAP.

Asn58 carries N-linked (GlcNAc...) asparagine glycosylation. A surface protein region spans residues Ser60–Gln316. Positions Cys82–Cys85 match the CXXC motif. N-linked (GlcNAc...) asparagine glycans are attached at residues Asn133, Asn140, Asn155, Asn218, Asn226, and Asn267. The interval Gly317 to Pro514 is transmembrane protein. Positions Leu328 to Leu348 are fusion peptide. N-linked (GlcNAc...) asparagine glycans are attached at residues Asn350 and Asn357. The short motif at Leu378–Thr394 is the CKS-17 element. Cysteines 395 and 402 form a disulfide. Positions Cys395–Cys403 match the CX6CC motif. 2 N-linked (GlcNAc...) asparagine glycosylation sites follow: Asn408 and Asn412. Residues Ile452–Phe472 form a helical membrane-spanning segment.

It belongs to the gamma type-C retroviral envelope protein family. HERV class-I R(b) env subfamily. The CXXC motif is highly conserved across a broad range of retroviral envelope proteins. It is thought to participate in the formation of a labile disulfide bond possibly with the CX6CC motif present in the transmembrane domain. As to expression, low expression in placenta and testis.

The protein resides in the cell membrane. Functionally, retroviral envelope proteins mediate receptor recognition and membrane fusion during early infection. Endogenous envelope proteins may have kept, lost or modified their original function during evolution. This endogenous envelope protein has lost its original fusogenic properties. The sequence is that of Endogenous retrovirus group PABLB member 1 Env polyprotein (ERVPABLB-1) from Homo sapiens (Human).